Reading from the N-terminus, the 453-residue chain is Bifunctional protein GlmU (453 aa).

A pyrophosphorylase region spans residues 1-226 (MKFSTVILAA…SIEVEGVNDR (226 aa)). Residues 8 to 11 (LAAG), K22, Q73, 78 to 79 (GT), 100 to 102 (YGD), G137, E151, N166, and N224 each bind UDP-N-acetyl-alpha-D-glucosamine. D102 serves as a coordination point for Mg(2+). N224 provides a ligand contact to Mg(2+). The segment at 227-247 (IQLARLERAFQARQAKKLLEQ) is linker. The segment at 248–453 (GVMLRDPARF…AGWQRPAKKK (206 aa)) is N-acetyltransferase. Residues R330 and K348 each contribute to the UDP-N-acetyl-alpha-D-glucosamine site. H360 acts as the Proton acceptor in catalysis. UDP-N-acetyl-alpha-D-glucosamine-binding residues include Y363 and N374. Acetyl-CoA contacts are provided by residues A377, 383–384 (NY), S402, A420, and R437.

This sequence in the N-terminal section; belongs to the N-acetylglucosamine-1-phosphate uridyltransferase family. It in the C-terminal section; belongs to the transferase hexapeptide repeat family. Homotrimer. It depends on Mg(2+) as a cofactor.

It localises to the cytoplasm. The enzyme catalyses alpha-D-glucosamine 1-phosphate + acetyl-CoA = N-acetyl-alpha-D-glucosamine 1-phosphate + CoA + H(+). It catalyses the reaction N-acetyl-alpha-D-glucosamine 1-phosphate + UTP + H(+) = UDP-N-acetyl-alpha-D-glucosamine + diphosphate. It participates in nucleotide-sugar biosynthesis; UDP-N-acetyl-alpha-D-glucosamine biosynthesis; N-acetyl-alpha-D-glucosamine 1-phosphate from alpha-D-glucosamine 6-phosphate (route II): step 2/2. The protein operates within nucleotide-sugar biosynthesis; UDP-N-acetyl-alpha-D-glucosamine biosynthesis; UDP-N-acetyl-alpha-D-glucosamine from N-acetyl-alpha-D-glucosamine 1-phosphate: step 1/1. It functions in the pathway bacterial outer membrane biogenesis; LPS lipid A biosynthesis. In terms of biological role, catalyzes the last two sequential reactions in the de novo biosynthetic pathway for UDP-N-acetylglucosamine (UDP-GlcNAc). The C-terminal domain catalyzes the transfer of acetyl group from acetyl coenzyme A to glucosamine-1-phosphate (GlcN-1-P) to produce N-acetylglucosamine-1-phosphate (GlcNAc-1-P), which is converted into UDP-GlcNAc by the transfer of uridine 5-monophosphate (from uridine 5-triphosphate), a reaction catalyzed by the N-terminal domain. In Vibrio cholerae serotype O1 (strain M66-2), this protein is Bifunctional protein GlmU.